A 339-amino-acid polypeptide reads, in one-letter code: Ketol-acid reductoisomerase (NADP(+)) (339 aa).

In terms of domain architecture, KARI N-terminal Rossmann spans 1–182; the sequence is MRVYYDRDAD…GGGRSGVIET (182 aa). Residues 24 to 27, R48, S51, T53, and 83 to 86 each bind NADP(+); these read YGSQ and DELQ. H108 is an active-site residue. G134 is a binding site for NADP(+). Positions 183 to 328 constitute a KARI C-terminal knotted domain; that stretch reads TFKEECETDL…GKLRAMMPWI (146 aa). The Mg(2+) site is built by D191, E195, E227, and E231. S252 provides a ligand contact to substrate.

The protein belongs to the ketol-acid reductoisomerase family. Requires Mg(2+) as cofactor.

It catalyses the reaction (2R)-2,3-dihydroxy-3-methylbutanoate + NADP(+) = (2S)-2-acetolactate + NADPH + H(+). The catalysed reaction is (2R,3R)-2,3-dihydroxy-3-methylpentanoate + NADP(+) = (S)-2-ethyl-2-hydroxy-3-oxobutanoate + NADPH + H(+). It functions in the pathway amino-acid biosynthesis; L-isoleucine biosynthesis; L-isoleucine from 2-oxobutanoate: step 2/4. It participates in amino-acid biosynthesis; L-valine biosynthesis; L-valine from pyruvate: step 2/4. Involved in the biosynthesis of branched-chain amino acids (BCAA). Catalyzes an alkyl-migration followed by a ketol-acid reduction of (S)-2-acetolactate (S2AL) to yield (R)-2,3-dihydroxy-isovalerate. In the isomerase reaction, S2AL is rearranged via a Mg-dependent methyl migration to produce 3-hydroxy-3-methyl-2-ketobutyrate (HMKB). In the reductase reaction, this 2-ketoacid undergoes a metal-dependent reduction by NADPH to yield (R)-2,3-dihydroxy-isovalerate. This Brucella melitensis biotype 2 (strain ATCC 23457) protein is Ketol-acid reductoisomerase (NADP(+)).